Here is a 264-residue protein sequence, read N- to C-terminus: Electron transfer flavoprotein subunit beta (264 aa).

Residues A6, 36–39 (NEWD), V64, 119–122 (GVQS), and 127–130 (YAST) contribute to the AMP site.

Heterodimer of an alpha and a beta subunit. Forms a ternary complex with trimethylamine dehydrogenase.

Heterodimeric electron transfer flavoprotein that accepts electrons from trimethylamine dehydrogenase. It transfers the electrons to the main respiratory chain via ETF-ubiquinone oxidoreductase (ETF dehydrogenase). EtfB binds an AMP molecule that probably has a purely structural role. The protein is Electron transfer flavoprotein subunit beta (etfB) of Methylophilus methylotrophus (Bacterium W3A1).